Consider the following 354-residue polypeptide: Ferredoxin--NADP reductase 2 (354 aa).

Residues threonine 14, aspartate 33, glutamine 41, tyrosine 46, alanine 86, phenylalanine 121, aspartate 289, and threonine 330 each contribute to the FAD site.

The protein belongs to the ferredoxin--NADP reductase type 2 family. In terms of assembly, homodimer. The cofactor is FAD.

The catalysed reaction is 2 reduced [2Fe-2S]-[ferredoxin] + NADP(+) + H(+) = 2 oxidized [2Fe-2S]-[ferredoxin] + NADPH. This is Ferredoxin--NADP reductase 2 from Christiangramia forsetii (strain DSM 17595 / CGMCC 1.15422 / KT0803) (Gramella forsetii).